Reading from the N-terminus, the 204-residue chain is Signal peptidase I (204 aa).

Residues 1-10 (MNLFKNFLKE) are Cytoplasmic-facing. A helical transmembrane segment spans residues 11–30 (WGLFLLILSLLALSRIFFWS). Residues 31–204 (NVRVEGHSMD…FWPITRIGTF (174 aa)) lie on the Extracellular side of the membrane. Active-site residues include serine 38 and lysine 76.

Belongs to the peptidase S26 family.

Its subcellular location is the cell membrane. It carries out the reaction Cleavage of hydrophobic, N-terminal signal or leader sequences from secreted and periplasmic proteins.. This Streptococcus pneumoniae (strain ATCC BAA-255 / R6) protein is Signal peptidase I (lepB).